A 537-amino-acid polypeptide reads, in one-letter code: MTKYIFVTGGVVSSIGKGIVAASLGRLLKNRGLKVTIQKFDPYINIDPGTMSPYQHGEVYVTDDGAETDLDLGHYERFIDINLNKYSNVTTGKIYSEVLRKERKGEYLGATVQVIPHITDALKEKIKRAATTTDSDVIITEVGGTVGDIESLPFLEALRQMKADVGSENVMYIHTTLLPYLKAAGEMKTKPTQHSVKELRGLGIQPNMLVIRTEEPVEQGIKNKLAQFCDVNPEAVIESRDVEHLYQIPLNLQAQSMDQIVCDHLKLDVPQADMTEWSAMVDKVMNLKKTTRIALVGKYVELPDAYLSVVEALKHSGYANDAAIELDWINANDLTAENAKKLLGQADGIIVPGGFGQRGTEGKIQAIRYAREHDVPMLGICLGMQLTCVEFARHVLGMEKANSFELDPDTAYPIIDIMRDQIDIEDMGGTLRLGLYPCKLKAGSRAAAAYNNQEVVQRRHRHRYEFNNKFRQDFEAAGFVFSGVSPDNRLVEIVELPEKKFFVAAQYHPELQSRPNRPEELYTAFVTAAVKNKNQSL.

The segment at Met1–Leu267 is amidoligase domain. Ser13 provides a ligand contact to CTP. A UTP-binding site is contributed by Ser13. Ser14 to Ile19 provides a ligand contact to ATP. Tyr54 is a binding site for L-glutamine. Asp71 is a binding site for ATP. Positions 71 and 141 each coordinate Mg(2+). CTP-binding positions include Asp148–Glu150, Lys188–Gln193, and Lys224. UTP contacts are provided by residues Lys188–Gln193 and Lys224. Position 240-242 (Arg240–Val242) interacts with ATP. The 244-residue stretch at Arg292–Gln535 folds into the Glutamine amidotransferase type-1 domain. Gly354 provides a ligand contact to L-glutamine. The active-site Nucleophile; for glutamine hydrolysis is Cys381. Residues Leu382–Gln385, Glu405, and Arg463 each bind L-glutamine. Catalysis depends on residues His508 and Glu510.

It belongs to the CTP synthase family. As to quaternary structure, homotetramer.

It catalyses the reaction UTP + L-glutamine + ATP + H2O = CTP + L-glutamate + ADP + phosphate + 2 H(+). The catalysed reaction is L-glutamine + H2O = L-glutamate + NH4(+). The enzyme catalyses UTP + NH4(+) + ATP = CTP + ADP + phosphate + 2 H(+). It participates in pyrimidine metabolism; CTP biosynthesis via de novo pathway; CTP from UDP: step 2/2. Its activity is regulated as follows. Allosterically activated by GTP, when glutamine is the substrate; GTP has no effect on the reaction when ammonia is the substrate. The allosteric effector GTP functions by stabilizing the protein conformation that binds the tetrahedral intermediate(s) formed during glutamine hydrolysis. Inhibited by the product CTP, via allosteric rather than competitive inhibition. In terms of biological role, catalyzes the ATP-dependent amination of UTP to CTP with either L-glutamine or ammonia as the source of nitrogen. Regulates intracellular CTP levels through interactions with the four ribonucleotide triphosphates. The polypeptide is CTP synthase (Streptococcus equi subsp. zooepidemicus (strain H70)).